Here is a 583-residue protein sequence, read N- to C-terminus: Putative fatty-acid--CoA ligase fadD25 (583 aa).

3 helical membrane passes run 77–97, 109–129, and 229–249; these read YVVS…LSIP, VFAD…DNVV, and FVLG…TSPI. The tract at residues 353 to 375 is disordered; it reads IVQFDPQKLPDGQAERTESDGGT.

The protein belongs to the ATP-dependent AMP-binding enzyme family.

The protein resides in the cell membrane. The polypeptide is Putative fatty-acid--CoA ligase fadD25 (fadD25) (Mycobacterium tuberculosis (strain CDC 1551 / Oshkosh)).